The sequence spans 226 residues: NADH-quinone oxidoreductase subunit B 2 (226 aa).

[4Fe-4S] cluster contacts are provided by Cys-37, Cys-38, Cys-103, and Cys-132.

This sequence belongs to the complex I 20 kDa subunit family. As to quaternary structure, NDH-1 is composed of 14 different subunits. Subunits NuoB, C, D, E, F, and G constitute the peripheral sector of the complex. The cofactor is [4Fe-4S] cluster.

It localises to the cell membrane. The enzyme catalyses a quinone + NADH + 5 H(+)(in) = a quinol + NAD(+) + 4 H(+)(out). NDH-1 shuttles electrons from NADH, via FMN and iron-sulfur (Fe-S) centers, to quinones in the respiratory chain. The immediate electron acceptor for the enzyme in this species is believed to be a menaquinone. Couples the redox reaction to proton translocation (for every two electrons transferred, four hydrogen ions are translocated across the cytoplasmic membrane), and thus conserves the redox energy in a proton gradient. This chain is NADH-quinone oxidoreductase subunit B 2, found in Salinispora arenicola (strain CNS-205).